The sequence spans 361 residues: Chorismate synthase (361 aa).

Arg-47 lines the NADP(+) pocket. FMN contacts are provided by residues 124 to 126, Gly-286, 301 to 305, and Arg-327; these read RAS and KPTAT.

This sequence belongs to the chorismate synthase family. Homotetramer. FMNH2 serves as cofactor.

It carries out the reaction 5-O-(1-carboxyvinyl)-3-phosphoshikimate = chorismate + phosphate. Its pathway is metabolic intermediate biosynthesis; chorismate biosynthesis; chorismate from D-erythrose 4-phosphate and phosphoenolpyruvate: step 7/7. In terms of biological role, catalyzes the anti-1,4-elimination of the C-3 phosphate and the C-6 proR hydrogen from 5-enolpyruvylshikimate-3-phosphate (EPSP) to yield chorismate, which is the branch point compound that serves as the starting substrate for the three terminal pathways of aromatic amino acid biosynthesis. This reaction introduces a second double bond into the aromatic ring system. The sequence is that of Chorismate synthase from Prochlorococcus marinus (strain NATL2A).